A 55-amino-acid chain; its full sequence is Large ribosomal subunit protein bL33 (55 aa).

It belongs to the bacterial ribosomal protein bL33 family.

The protein is Large ribosomal subunit protein bL33 of Gluconobacter oxydans (strain 621H) (Gluconobacter suboxydans).